Here is a 488-residue protein sequence, read N- to C-terminus: Bifunctional protein HldE (488 aa).

A ribokinase region spans residues 1–330 (MIDFDGLSNA…RNILPPASLA (330 aa)). Residue 205–208 (NSKE) participates in ATP binding. The active site involves Asp275. The cytidylyltransferase stretch occupies residues 358-488 (FTNGCFDILH…TSLVKRAGGA (131 aa)).

This sequence in the N-terminal section; belongs to the carbohydrate kinase PfkB family. It in the C-terminal section; belongs to the cytidylyltransferase family. Homodimer.

The enzyme catalyses D-glycero-beta-D-manno-heptose 7-phosphate + ATP = D-glycero-beta-D-manno-heptose 1,7-bisphosphate + ADP + H(+). It carries out the reaction D-glycero-beta-D-manno-heptose 1-phosphate + ATP + H(+) = ADP-D-glycero-beta-D-manno-heptose + diphosphate. It participates in nucleotide-sugar biosynthesis; ADP-L-glycero-beta-D-manno-heptose biosynthesis; ADP-L-glycero-beta-D-manno-heptose from D-glycero-beta-D-manno-heptose 7-phosphate: step 1/4. Its pathway is nucleotide-sugar biosynthesis; ADP-L-glycero-beta-D-manno-heptose biosynthesis; ADP-L-glycero-beta-D-manno-heptose from D-glycero-beta-D-manno-heptose 7-phosphate: step 3/4. Functionally, catalyzes the phosphorylation of D-glycero-D-manno-heptose 7-phosphate at the C-1 position to selectively form D-glycero-beta-D-manno-heptose-1,7-bisphosphate. Catalyzes the ADP transfer from ATP to D-glycero-beta-D-manno-heptose 1-phosphate, yielding ADP-D-glycero-beta-D-manno-heptose. This Nitrobacter winogradskyi (strain ATCC 25391 / DSM 10237 / CIP 104748 / NCIMB 11846 / Nb-255) protein is Bifunctional protein HldE.